A 313-amino-acid chain; its full sequence is N-acetyl-gamma-glutamyl-phosphate reductase (313 aa).

C117 is a catalytic residue.

Belongs to the NAGSA dehydrogenase family. Type 2 subfamily.

The protein resides in the cytoplasm. The catalysed reaction is N-acetyl-L-glutamate 5-semialdehyde + phosphate + NADP(+) = N-acetyl-L-glutamyl 5-phosphate + NADPH + H(+). It functions in the pathway amino-acid biosynthesis; L-arginine biosynthesis; N(2)-acetyl-L-ornithine from L-glutamate: step 3/4. Functionally, catalyzes the NADPH-dependent reduction of N-acetyl-5-glutamyl phosphate to yield N-acetyl-L-glutamate 5-semialdehyde. This Burkholderia orbicola (strain MC0-3) protein is N-acetyl-gamma-glutamyl-phosphate reductase.